Here is a 361-residue protein sequence, read N- to C-terminus: Chorismate synthase (361 aa).

Arginine 48 is an NADP(+) binding site. FMN-binding positions include 126–128, glycine 269, 302–306, and asparagine 328; these read RSS and KPVPS.

The protein belongs to the chorismate synthase family. As to quaternary structure, homotetramer. FMNH2 is required as a cofactor.

The enzyme catalyses 5-O-(1-carboxyvinyl)-3-phosphoshikimate = chorismate + phosphate. Its pathway is metabolic intermediate biosynthesis; chorismate biosynthesis; chorismate from D-erythrose 4-phosphate and phosphoenolpyruvate: step 7/7. In terms of biological role, catalyzes the anti-1,4-elimination of the C-3 phosphate and the C-6 proR hydrogen from 5-enolpyruvylshikimate-3-phosphate (EPSP) to yield chorismate, which is the branch point compound that serves as the starting substrate for the three terminal pathways of aromatic amino acid biosynthesis. This reaction introduces a second double bond into the aromatic ring system. The sequence is that of Chorismate synthase from Treponema denticola (strain ATCC 35405 / DSM 14222 / CIP 103919 / JCM 8153 / KCTC 15104).